The primary structure comprises 307 residues: MAKKKIAISCGDIQGVGLELILKSHKEVSALCEPLYLIDSELLERANQLLNNAYETKTLNTLAINAPLPLLNSGTIGKVSAQSGAYSFESFKKACELADDKEVDGICTLPINKLAWQQAQIPFVGHTDFLKQRYKDHQIIMMLGCFRLFVGLFSDHVPLGAVSQLIQVKALVRFLLAFQKSTQAKIIQVCGFNPHAGEEGLFGKEDAKILKAIQKSNQTLGFECFLGPLPADSAFAPNKRKITPFYVSMSHDVGLAPLKALYFDESINVSLNAPILRASTDHGTAFDIAYQNKANNKSYVNAIKYLA.

Residues H126 and T127 each coordinate substrate. Positions 156, 195, and 251 each coordinate a divalent metal cation. 3 residues coordinate substrate: K259, N268, and R277.

Belongs to the PdxA family. In terms of assembly, homodimer. Zn(2+) serves as cofactor. Mg(2+) is required as a cofactor. The cofactor is Co(2+).

It localises to the cytoplasm. The catalysed reaction is 4-(phosphooxy)-L-threonine + NAD(+) = 3-amino-2-oxopropyl phosphate + CO2 + NADH. It participates in cofactor biosynthesis; pyridoxine 5'-phosphate biosynthesis; pyridoxine 5'-phosphate from D-erythrose 4-phosphate: step 4/5. Catalyzes the NAD(P)-dependent oxidation of 4-(phosphooxy)-L-threonine (HTP) into 2-amino-3-oxo-4-(phosphooxy)butyric acid which spontaneously decarboxylates to form 3-amino-2-oxopropyl phosphate (AHAP). The protein is 4-hydroxythreonine-4-phosphate dehydrogenase of Helicobacter pylori (strain Shi470).